The primary structure comprises 432 residues: MGKNVVILGTQWGDEGKGKVVDLLTEDVAAVVRFQGGHNAGHTLVIDGKKTVLHLIPSGILREGVQCIIGNGVVLSPAALKAEVLELLEQGVPAVDRLKISAACPLILPYHIAIDQARELARGEKKIGTTGRGIGPAYEDKVARRAIRVGDLLDSERFASKLKEVLEYYNFVLTQYHKVEPISFDEVYTAGLEMAEFLRPMVADTITLLHDLRKAGANIMFEGAQGSLLDVDHGTYPYVTSSNTTAGGAPAGTGFGPLYLDYVLGITKAYTTRVGSGPFPTELFDEDGERLGRRGHEFGATTGRSRRCGWFDSVALRHAVQINSVSGICLTKLDVLDGSSVIKVCVSYADENGNPVAGSLVDSEGYEKARPVYVELPGWTESTVGAENFEALPKNAQDYIRFLEEQVGVPVDIISTGPDRNETIVIRDPFKQ.

GTP contacts are provided by residues 13–19 (GDEGKGK) and 41–43 (GHT). The active-site Proton acceptor is Asp14. 2 residues coordinate Mg(2+): Asp14 and Gly41. IMP-binding positions include 14–17 (DEGK), 39–42 (NAGH), Thr130, Arg144, Gln225, Thr240, and Arg304. The active-site Proton donor is His42. 300–306 (ATTGRSR) serves as a coordination point for substrate. Residues Arg306, 332-334 (KLD), and 415-417 (STG) each bind GTP.

This sequence belongs to the adenylosuccinate synthetase family. As to quaternary structure, homodimer. It depends on Mg(2+) as a cofactor.

It localises to the cytoplasm. The catalysed reaction is IMP + L-aspartate + GTP = N(6)-(1,2-dicarboxyethyl)-AMP + GDP + phosphate + 2 H(+). Its pathway is purine metabolism; AMP biosynthesis via de novo pathway; AMP from IMP: step 1/2. Plays an important role in the de novo pathway of purine nucleotide biosynthesis. Catalyzes the first committed step in the biosynthesis of AMP from IMP. The sequence is that of Adenylosuccinate synthetase from Marinomonas sp. (strain MWYL1).